Reading from the N-terminus, the 61-residue chain is Protein transport protein Sec61 subunit beta (61 aa).

At 1–35 the chain is on the cytoplasmic side; sequence MKRPSTQRAPATVNKGGNSMMKFYSEDAIGLKVGP. A helical membrane pass occupies residues 36–56; the sequence is TAVLFMSLIFIAFVIILHIMG. Over 57 to 61 the chain is Extracellular; the sequence is KYTRS.

The protein belongs to the SEC61-beta family. The SEC61 channel-forming translocon complex.

It localises to the endoplasmic reticulum membrane. Component of SEC61 channel-forming translocon complex that mediates transport of signal peptide-containing precursor polypeptides across the endoplasmic reticulum (ER). Forms a ribosome receptor and a gated pore in the ER membrane, both functions required for cotranslational translocation of nascent polypeptides. This is Protein transport protein Sec61 subunit beta (sec61b) from Dictyostelium discoideum (Social amoeba).